Here is a 491-residue protein sequence, read N- to C-terminus: uncharacterized protein (491 aa).

Residue 267 to 274 (GIQGTGKS) participates in ATP binding.

It belongs to the AAA ATPase family. Highly divergent.

Its subcellular location is the plastid. It localises to the chloroplast. This is an uncharacterized protein from Gracilaria tenuistipitata var. liui (Red alga).